Here is a 108-residue protein sequence, read N- to C-terminus: Movement protein TGB2 (108 aa).

Topologically, residues 1-8 (MPLTPPPD) are cytoplasmic. Residues 9–29 (YTKPFIAVVVGGTLAAFVLLL) form a helical membrane-spanning segment. Residues 30 to 71 (TRNTLPHTGDNLHSLPHGGTYCDGTKRIRYGGPHRSHVPELP) are Lumenal-facing. Residues 72 to 92 (AKSWALITVVAILIALHFSCL) traverse the membrane as a helical segment. Residues 93-108 (RTHRVHRCVLCHTTSG) are Cytoplasmic-facing.

It belongs to the Tymovirales TGBp2 protein family.

It is found in the host endoplasmic reticulum membrane. In terms of biological role, plays a role in viral cell-to-cell propagation, by facilitating genome transport to neighboring plant cells through plasmosdesmata,. This is Movement protein TGB2 from Lily virus X.